The primary structure comprises 29 residues: Cytochrome b6-f complex subunit 8 (29 aa).

Residues Ile3–Val23 traverse the membrane as a helical segment.

This sequence belongs to the PetN family. As to quaternary structure, the 4 large subunits of the cytochrome b6-f complex are cytochrome b6, subunit IV (17 kDa polypeptide, PetD), cytochrome f and the Rieske protein, while the 4 small subunits are PetG, PetL, PetM and PetN. The complex functions as a dimer.

The protein resides in the cellular thylakoid membrane. Functionally, component of the cytochrome b6-f complex, which mediates electron transfer between photosystem II (PSII) and photosystem I (PSI), cyclic electron flow around PSI, and state transitions. This is Cytochrome b6-f complex subunit 8 from Synechococcus sp. (strain JA-3-3Ab) (Cyanobacteria bacterium Yellowstone A-Prime).